The primary structure comprises 256 residues: Thiazole synthase (256 aa).

The active-site Schiff-base intermediate with DXP is the Lys-95. 1-deoxy-D-xylulose 5-phosphate is bound by residues Gly-156, 182–183, and 204–205; these read AG and NT.

It belongs to the ThiG family. In terms of assembly, homotetramer. Forms heterodimers with either ThiH or ThiS.

It is found in the cytoplasm. The enzyme catalyses [ThiS sulfur-carrier protein]-C-terminal-Gly-aminoethanethioate + 2-iminoacetate + 1-deoxy-D-xylulose 5-phosphate = [ThiS sulfur-carrier protein]-C-terminal Gly-Gly + 2-[(2R,5Z)-2-carboxy-4-methylthiazol-5(2H)-ylidene]ethyl phosphate + 2 H2O + H(+). It functions in the pathway cofactor biosynthesis; thiamine diphosphate biosynthesis. In terms of biological role, catalyzes the rearrangement of 1-deoxy-D-xylulose 5-phosphate (DXP) to produce the thiazole phosphate moiety of thiamine. Sulfur is provided by the thiocarboxylate moiety of the carrier protein ThiS. In vitro, sulfur can be provided by H(2)S. The protein is Thiazole synthase of Vibrio cholerae serotype O1 (strain ATCC 39541 / Classical Ogawa 395 / O395).